The following is a 328-amino-acid chain: D-cysteine desulfhydrase (328 aa).

N6-(pyridoxal phosphate)lysine is present on Lys51.

It belongs to the ACC deaminase/D-cysteine desulfhydrase family. In terms of assembly, homodimer. Pyridoxal 5'-phosphate is required as a cofactor.

It catalyses the reaction D-cysteine + H2O = hydrogen sulfide + pyruvate + NH4(+) + H(+). Its function is as follows. Catalyzes the alpha,beta-elimination reaction of D-cysteine and of several D-cysteine derivatives. It could be a defense mechanism against D-cysteine. The protein is D-cysteine desulfhydrase of Salmonella choleraesuis (strain SC-B67).